The chain runs to 89 residues: Large ribosomal subunit protein uL23cz/uL23cy (89 aa).

It belongs to the universal ribosomal protein uL23 family. Part of the 50S ribosomal subunit.

Its subcellular location is the plastid. It localises to the chloroplast. Its function is as follows. Binds to 23S rRNA. In Pelargonium hortorum (Common geranium), this protein is Large ribosomal subunit protein uL23cz/uL23cy (rpl23-A).